Here is a 140-residue protein sequence, read N- to C-terminus: MSRTVMAFDYGTKSIGSAIGQEITGTASPLKAFKANDGIPNWDEIEKQIKEWQPNLLIVGLPTDLHGKDLDTITPRAKKFAQRLHGRFGLPVELHDERLSTTEARAELFAMGGYKALSKGNVDCQSAVIILESWFESQWG.

The protein belongs to the YqgF nuclease family.

It is found in the cytoplasm. Could be a nuclease involved in processing of the 5'-end of pre-16S rRNA. The sequence is that of Putative pre-16S rRNA nuclease from Vibrio cholerae serotype O1 (strain ATCC 39541 / Classical Ogawa 395 / O395).